The following is a 274-amino-acid chain: uncharacterized protein (274 aa).

A disordered region spans residues 253-274 (QTGDVRTTEGTALTDDTTKRNI).

This is an uncharacterized protein from Deinococcus radiodurans (strain ATCC 13939 / DSM 20539 / JCM 16871 / CCUG 27074 / LMG 4051 / NBRC 15346 / NCIMB 9279 / VKM B-1422 / R1).